Consider the following 455-residue polypeptide: uncharacterized protein (455 aa).

N42, N49, and N70 each carry an N-linked (GlcNAc...) asparagine glycan. A run of 4 helical transmembrane segments spans residues 127–147, 153–173, 177–197, and 377–397; these read AILISFGLIIGALLYLYTWIF, SLLDWMFISCSGIIHQFMFRI, ICALVLIGFWLLCCLVIITYY, and YKFCFIFYGIAIIVFILEIIF. N-linked (GlcNAc...) asparagine glycosylation is present at N403.

The protein localises to the membrane. This is an uncharacterized protein from Caenorhabditis elegans.